The primary structure comprises 533 residues: AAA-ATPase At5g17740 (533 aa).

The helical transmembrane segment at 11-27 threads the bilayer; that stretch reads ASMFSTYASMMGYVMII. 252 to 259 lines the ATP pocket; that stretch reads GPPGTGKS.

The protein belongs to the AAA ATPase family. BCS1 subfamily. Mg(2+) serves as cofactor.

The protein resides in the membrane. It catalyses the reaction ATP + H2O = ADP + phosphate + H(+). This chain is AAA-ATPase At5g17740, found in Arabidopsis thaliana (Mouse-ear cress).